We begin with the raw amino-acid sequence, 234 residues long: Large ribosomal subunit protein uL1 (234 aa).

Belongs to the universal ribosomal protein uL1 family. Part of the 50S ribosomal subunit.

Binds directly to 23S rRNA. The L1 stalk is quite mobile in the ribosome, and is involved in E site tRNA release. Functionally, protein L1 is also a translational repressor protein, it controls the translation of the L11 operon by binding to its mRNA. This chain is Large ribosomal subunit protein uL1, found in Aliivibrio salmonicida (strain LFI1238) (Vibrio salmonicida (strain LFI1238)).